A 266-amino-acid chain; its full sequence is 4-hydroxy-tetrahydrodipicolinate reductase (266 aa).

10–15 (GPRGRM) serves as a coordination point for NAD(+). Lysine 38 provides a ligand contact to NADP(+). NAD(+) contacts are provided by residues 99–101 (GTT) and 125–128 (APNF). The active-site Proton donor/acceptor is the histidine 155. A (S)-2,3,4,5-tetrahydrodipicolinate-binding site is contributed by histidine 156. Catalysis depends on lysine 159, which acts as the Proton donor. 165-166 (GT) provides a ligand contact to (S)-2,3,4,5-tetrahydrodipicolinate.

The protein belongs to the DapB family.

It is found in the cytoplasm. It carries out the reaction (S)-2,3,4,5-tetrahydrodipicolinate + NAD(+) + H2O = (2S,4S)-4-hydroxy-2,3,4,5-tetrahydrodipicolinate + NADH + H(+). It catalyses the reaction (S)-2,3,4,5-tetrahydrodipicolinate + NADP(+) + H2O = (2S,4S)-4-hydroxy-2,3,4,5-tetrahydrodipicolinate + NADPH + H(+). The protein operates within amino-acid biosynthesis; L-lysine biosynthesis via DAP pathway; (S)-tetrahydrodipicolinate from L-aspartate: step 4/4. Its function is as follows. Catalyzes the conversion of 4-hydroxy-tetrahydrodipicolinate (HTPA) to tetrahydrodipicolinate. This is 4-hydroxy-tetrahydrodipicolinate reductase from Bacillus cereus (strain ATCC 10987 / NRS 248).